The chain runs to 478 residues: MLMDHPNWLKQRAELTPDRMAVIQGDHKLTFIQLFHEAKKTAGRLKSFGLKNGDTAALLLTNRMEMVIAVHACFLLGVRIVLLNTKLSMAERSYQIEHSEAKLLLTEKPFIEEHRGGQPARAVDIEDVQNAACPPVTEIESIHLDDAATIMYTSGTTGRPKGVMQTFANHYFSAVSSALNLGLQEHDRWLIALPLFHISGLSALFKSVIYGMTVVLHQRFDAEEVLRSIKDQQVTIASVVQTMLSRLAAKVDRCPGSLRCLLLGGGPAPLSLLEECKRKRLPVVQSYGMTETCSQIATLAPEYSIEKLGSAGKPLFASSIKIEKNGTECQPGEHGEITVKGPTVMKGYLKNEAANKDSFNDGWFKTGDIGYFDDDGFLYVLDRRSDLIISGGENIYPAEVEAVLLSHPNVAEAGVKGVDDKTWGKVPHAYLVADSPVDEEELSEFCKERLASYKVPKAFHFVDRLPRNASNKLMRHKL.

The protein belongs to the ATP-dependent AMP-binding enzyme family. MenE subfamily.

The enzyme catalyses 2-succinylbenzoate + ATP + CoA = 2-succinylbenzoyl-CoA + AMP + diphosphate. The protein operates within quinol/quinone metabolism; 1,4-dihydroxy-2-naphthoate biosynthesis; 1,4-dihydroxy-2-naphthoate from chorismate: step 5/7. It functions in the pathway quinol/quinone metabolism; menaquinone biosynthesis. Its function is as follows. Converts 2-succinylbenzoate (OSB) to 2-succinylbenzoyl-CoA (OSB-CoA). This chain is 2-succinylbenzoate--CoA ligase, found in Bacillus licheniformis (strain ATCC 14580 / DSM 13 / JCM 2505 / CCUG 7422 / NBRC 12200 / NCIMB 9375 / NCTC 10341 / NRRL NRS-1264 / Gibson 46).